We begin with the raw amino-acid sequence, 430 residues long: Histidine--tRNA ligase (430 aa).

It belongs to the class-II aminoacyl-tRNA synthetase family. As to quaternary structure, homodimer.

It localises to the cytoplasm. It catalyses the reaction tRNA(His) + L-histidine + ATP = L-histidyl-tRNA(His) + AMP + diphosphate + H(+). This is Histidine--tRNA ligase from Chlamydia caviae (strain ATCC VR-813 / DSM 19441 / 03DC25 / GPIC) (Chlamydophila caviae).